The sequence spans 1329 residues: Putative protein tag-53 (1329 aa).

One can recognise an EGF-like 1 domain in the interval 65–92 (SCDKPCYNGVCLNKACVCSKGWYGSQCD). Cystine bridges form between Cys-66–Cys-75, Cys-70–Cys-80, Cys-82–Cys-91, Cys-94–Cys-120, and Cys-144–Cys-166. Residues 94 to 203 (CFGRIRISDN…NGFNVSYESN (110 aa)) enclose the CUB domain. Residue Asn-103 is glycosylated (N-linked (GlcNAc...) asparagine). N-linked (GlcNAc...) asparagine glycans are attached at residues Asn-197 and Asn-208. EGF-like domains are found at residues 204 to 232 (RCAY…LNCE) and 235 to 270 (VCQL…ETCQ). Intrachain disulfides connect Cys-205–Cys-215, Cys-209–Cys-220, Cys-222–Cys-231, Cys-236–Cys-252, Cys-247–Cys-257, and Cys-259–Cys-269. Kelch repeat units follow at residues 302 to 353 (VVWS…KYKN), 355 to 408 (LYMF…VAGH), 416 to 463 (EMFV…AVEY), 471 to 518 (AILV…YLNG), 520 to 575 (MVVV…VIGQ), and 577 to 619 (LYAL…KCVF). 6 N-linked (GlcNAc...) asparagine glycosylation sites follow: Asn-324, Asn-395, Asn-447, Asn-481, Asn-529, and Asn-555. N-linked (GlcNAc...) asparagine glycosylation is present at Asn-820. Asn-832 carries N-linked (GlcNAc...) asparagine; atypical glycosylation. N-linked (GlcNAc...) asparagine glycans are attached at residues Asn-833 and Asn-934. 8 cysteine pairs are disulfide-bonded: Cys-945/Cys-953, Cys-947/Cys-968, Cys-971/Cys-980, Cys-983/Cys-997, Cys-1000/Cys-1009, Cys-1002/Cys-1016, Cys-1018/Cys-1028, and Cys-1031/Cys-1045. 2 consecutive Laminin EGF-like domains span residues 945–999 (CQCN…VCSP) and 1000–1047 (CDCH…PCFY). In terms of domain architecture, EGF-like 4 spans 952–998 (TCFTSVGSFPPVTIEKCQSCQNHTTGAHCERCAPGFYGDARNGGVCS). N-linked (GlcNAc...) asparagine glycosylation is present at Asn-973. Asn-1066, Asn-1102, and Asn-1147 each carry an N-linked (GlcNAc...) asparagine glycan. The helical transmembrane segment at 1176 to 1196 (VLFFVIFAACFIVLLVVAGLL) threads the bilayer. Residues 1197-1329 (WMIKVRIEAY…TIRQRPNNND (133 aa)) are Cytoplasmic-facing.

It is found in the membrane. This Caenorhabditis elegans protein is Putative protein tag-53 (tag-53).